A 158-amino-acid chain; its full sequence is NAD(P)H-quinone oxidoreductase subunit J, chloroplastic (158 aa).

This sequence belongs to the complex I 30 kDa subunit family. In terms of assembly, NDH is composed of at least 16 different subunits, 5 of which are encoded in the nucleus.

The protein resides in the plastid. Its subcellular location is the chloroplast thylakoid membrane. The enzyme catalyses a plastoquinone + NADH + (n+1) H(+)(in) = a plastoquinol + NAD(+) + n H(+)(out). The catalysed reaction is a plastoquinone + NADPH + (n+1) H(+)(in) = a plastoquinol + NADP(+) + n H(+)(out). In terms of biological role, NDH shuttles electrons from NAD(P)H:plastoquinone, via FMN and iron-sulfur (Fe-S) centers, to quinones in the photosynthetic chain and possibly in a chloroplast respiratory chain. The immediate electron acceptor for the enzyme in this species is believed to be plastoquinone. Couples the redox reaction to proton translocation, and thus conserves the redox energy in a proton gradient. This chain is NAD(P)H-quinone oxidoreductase subunit J, chloroplastic, found in Platanus occidentalis (Sycamore).